A 141-amino-acid polypeptide reads, in one-letter code: Large ribosomal subunit protein uL16 (141 aa).

This sequence belongs to the universal ribosomal protein uL16 family. As to quaternary structure, part of the 50S ribosomal subunit.

Binds 23S rRNA and is also seen to make contacts with the A and possibly P site tRNAs. The chain is Large ribosomal subunit protein uL16 from Campylobacter concisus (strain 13826).